The chain runs to 489 residues: Rhamnulokinase (489 aa).

Residue Ala13–Arg17 participates in ATP binding. Cysteines 68 and 222 form a disulfide. Residues Gly83 and His236–Thr238 each bind substrate. Catalysis depends on Asp237, which acts as the Proton acceptor. Position 259 (Thr259) interacts with ATP. Asn296 lines the substrate pocket. Position 304 (Gln304) interacts with ATP. Cys353 and Cys370 are disulfide-bonded. Gly402 is an ATP binding site. Cys413 and Cys417 are joined by a disulfide.

It belongs to the rhamnulokinase family. Requires Mg(2+) as cofactor.

It catalyses the reaction L-rhamnulose + ATP = L-rhamnulose 1-phosphate + ADP + H(+). The protein operates within carbohydrate degradation; L-rhamnose degradation; glycerone phosphate from L-rhamnose: step 2/3. Functionally, involved in the catabolism of L-rhamnose (6-deoxy-L-mannose). Catalyzes the transfer of the gamma-phosphate group from ATP to the 1-hydroxyl group of L-rhamnulose to yield L-rhamnulose 1-phosphate. The polypeptide is Rhamnulokinase (Salmonella choleraesuis (strain SC-B67)).